The chain runs to 342 residues: Autoinducer 2 import system permease protein LsrC (342 aa).

Over 1–13 the chain is Periplasmic; it reads MLKFIQNNREITA. Residues 14–34 form a helical membrane-spanning segment; the sequence is LLAVVLLFVLPGFLDRQYLSV. The Cytoplasmic portion of the chain corresponds to 35–38; sequence QTLT. The chain crosses the membrane as a helical span at residues 39 to 59; the sequence is MVYSSAQILILLAMGATLVML. Residues 60-69 lie on the Periplasmic side of the membrane; the sequence is TRNIDVSVGS. A helical transmembrane segment spans residues 70–90; the sequence is ITGMCAVLLGMLLNAGYSLPV. The Cytoplasmic portion of the chain corresponds to 91–92; that stretch reads AC. A helical transmembrane segment spans residues 93–113; it reads VATLLLGLLAGFFNGVLVAWL. A topological domain (periplasmic) is located at residue Lys-114. Residues 115–135 form a helical membrane-spanning segment; that stretch reads IPAIVATLGTLGLYRGIMLLW. Residues 136–154 lie on the Cytoplasmic side of the membrane; the sequence is TGGKWIEGLPAELKQLSAP. Residues 155–175 traverse the membrane as a helical segment; that stretch reads LLFGVSAIGWLTIILVAFMAW. Residues 176–212 are Periplasmic-facing; it reads LLAKTAFGRSFYVTGDNLQGARQLGVRTEAIRIVAFS. Residues 213–233 form a helical membrane-spanning segment; the sequence is LNGCMAALAGIVFASQIGFIP. The Cytoplasmic portion of the chain corresponds to 234–251; that stretch reads NQTGTGLEMKAIAACVLG. Residues 252–272 form a helical membrane-spanning segment; that stretch reads GISLLGGSGAIIGAVLGAWFL. Residues 273–283 are Periplasmic-facing; the sequence is TQIDSVLVLLR. The helical transmembrane segment at 284 to 304 threads the bilayer; it reads IPAWWNDFIAGMVLLAVLVFD. Topologically, residues 305 to 342 are cytoplasmic; the sequence is GRLRCALERNLRRQKYARFMMPPPPVKPASSGKKREAA.

This sequence belongs to the binding-protein-dependent transport system permease family. AraH/RbsC subfamily. As to quaternary structure, the complex is composed of two ATP-binding proteins (LsrA), two transmembrane proteins (LsrC and LsrD) and a solute-binding protein (LsrB).

Its subcellular location is the cell inner membrane. Functionally, part of the ABC transporter complex LsrABCD involved in autoinducer 2 (AI-2) import. Probably responsible for the translocation of the substrate across the membrane. The polypeptide is Autoinducer 2 import system permease protein LsrC (lsrC) (Escherichia coli (strain SMS-3-5 / SECEC)).